The primary structure comprises 1093 residues: Non-canonical non-ribosomal peptide synthetase ascB (1093 aa).

Residues 1-26 (MTVNGHHTNGVNGANGTNGHANGSNG) show a composition bias toward low complexity. Residues 1–27 (MTVNGHHTNGVNGANGTNGHANGSNGI) are disordered. An adenylation (A) domain region spans residues 35 to 392 (EIVPFVKPQV…LSLTFAPTDN (358 aa)). A Carrier domain is found at 591–678 (DNLEQNLKSL…EIAAALTKGS (88 aa)). Ser-627 carries the post-translational modification O-(pantetheine 4'-phosphoryl)serine. Residues 721–971 (LTGATGSLGS…IPVDDAASTV (251 aa)) form a thioester reductase (TR) domain region.

This sequence belongs to the NRP synthetase family.

It carries out the reaction ilicicolinate B + AH2 + ATP = ilicicolin B + A + AMP + diphosphate. It functions in the pathway secondary metabolite biosynthesis; terpenoid biosynthesis. In terms of biological role, non-canonical non-ribosomal peptide synthetase; part of the asc-1 gene cluster that mediates the biosynthesis of both ascochlorin and ascofuranone, a strong inhibitor of cyanide-insensitive alternative oxidases and a promising drug candidate against African trypanosomiasis. The first step in the pathway is performed by the non-reducing polyketide synthase ascC that produces orsellinic acid by condensing acetyl-CoA with 3 malonyl-CoA units. Orsellinic acid is then prenylated by the prenyltransferase ascA to yield ilicicolinic acid B. Ilicicolinic acid B is further reduced to ilicicolin B by the reductase ascB. The halogenase ascD then chlorinates ilicicolin B to produce ilicicolin A which is converted to ilicicolin A epoxide by the cytochrome P450 monooxygenase ascE that catalyzes stereoselective epoxidation of the terminal double bond of the prenyl group. Ilicicolin A epoxide is the last common precursor for the biosynthesis of ascofuranone and ascochlorin. The terpene cyclase ascF produces a monocyclic terpene, and the cyclization reaction is proposed to be initiated by protonation of the terminal epoxide of ilicicolin A epoxide to generate a monocyclic tertiarycation, which is followed by a series of hydride and methyl shifts with abstraction of proton, leading to the formation of the (14S,15R,19R)-trimethylcyclohexanone ring structure of ilicicolin C, which is finally reduced to ascochlorin by the dehydrogenase ascG. On the other hand, ilicicolin A epoxide is hydroxylated by the cytochrome P450 monooxygenase ascH, and the resultant product is cyclized by the terpene cyclase ascI to ascofuranol via protonation-initiated epoxide ring opening, which facilitates the 6-endo-tet cyclization to form the tetrahy-drofuran ring. Finally, ascofuranol is oxidized into ascofuranone by ascJ. The sequence is that of Non-canonical non-ribosomal peptide synthetase ascB from Acremonium egyptiacum (Oospora egyptiaca).